The following is a 308-amino-acid chain: MKQCFVVTTTKRLDSLLASLLNLSRVKVVKLIMNGQIKVNEKLTFKNSLIVAKDDVIKVEIHDETTSDFITSVEPYNLKLEVLFEDKDLMVINKPSGLLTHPTTFNEKASLLAACIFHNNKNPVYLVHRLDRDTSGAIVVCKNQASLLNLQNQLQNRTLKRYYVALVHFPFNALTGSINAPLARVNNNKVMFKIAQTAKAKQAITKFKVINQNEKAALISLELLTGRTHQIRVHLKFIQHPVYNDPLYGIKSEKKDSYGQFLHANRICFIHPTLNKPMDFHAPLEPKFSTKLKSLNLSLTDPLHVLFK.

In terms of domain architecture, S4 RNA-binding spans 11–87 (KRLDSLLASL…LKLEVLFEDK (77 aa)). Residue aspartate 131 is part of the active site.

It belongs to the pseudouridine synthase RluA family.

The enzyme catalyses a uridine in RNA = a pseudouridine in RNA. This is an uncharacterized protein from Mycoplasma genitalium (strain ATCC 33530 / DSM 19775 / NCTC 10195 / G37) (Mycoplasmoides genitalium).